The following is a 181-amino-acid chain: Translationally-controlled tumor protein homolog (181 aa).

One can recognise a TCTP domain in the interval 1–181; it reads MLIYKDIFTD…VKEAILEEKC (181 aa).

This sequence belongs to the TCTP family.

Its subcellular location is the cytoplasm. Functionally, involved in calcium binding and microtubule stabilization. The polypeptide is Translationally-controlled tumor protein homolog (tct-1) (Caenorhabditis briggsae).